The sequence spans 478 residues: Proline--tRNA ligase (478 aa).

Belongs to the class-II aminoacyl-tRNA synthetase family. ProS type 3 subfamily. As to quaternary structure, homodimer.

It localises to the cytoplasm. It catalyses the reaction tRNA(Pro) + L-proline + ATP = L-prolyl-tRNA(Pro) + AMP + diphosphate. In terms of biological role, catalyzes the attachment of proline to tRNA(Pro) in a two-step reaction: proline is first activated by ATP to form Pro-AMP and then transferred to the acceptor end of tRNA(Pro). This Clostridium botulinum (strain Okra / Type B1) protein is Proline--tRNA ligase.